Consider the following 198-residue polypeptide: Nucleoside triphosphate pyrophosphatase (198 aa).

Residue Asp-72 is the Proton acceptor of the active site.

Belongs to the Maf family. A divalent metal cation is required as a cofactor.

It is found in the cytoplasm. The catalysed reaction is a ribonucleoside 5'-triphosphate + H2O = a ribonucleoside 5'-phosphate + diphosphate + H(+). The enzyme catalyses a 2'-deoxyribonucleoside 5'-triphosphate + H2O = a 2'-deoxyribonucleoside 5'-phosphate + diphosphate + H(+). Functionally, nucleoside triphosphate pyrophosphatase. May have a dual role in cell division arrest and in preventing the incorporation of modified nucleotides into cellular nucleic acids. This Acinetobacter baylyi (strain ATCC 33305 / BD413 / ADP1) protein is Nucleoside triphosphate pyrophosphatase.